A 312-amino-acid polypeptide reads, in one-letter code: DNA-directed RNA polymerase subunit alpha (312 aa).

An alpha N-terminal domain (alpha-NTD) region spans residues 1–226 (MIEFEKPRIE…EHLDIFVNLT (226 aa)). An alpha C-terminal domain (alpha-CTD) region spans residues 243 to 312 (KEKMLEMTIE…DLGLGLRKDD (70 aa)).

This sequence belongs to the RNA polymerase alpha chain family. In terms of assembly, homodimer. The RNAP catalytic core consists of 2 alpha, 1 beta, 1 beta' and 1 omega subunit. When a sigma factor is associated with the core the holoenzyme is formed, which can initiate transcription.

It carries out the reaction RNA(n) + a ribonucleoside 5'-triphosphate = RNA(n+1) + diphosphate. Its function is as follows. DNA-dependent RNA polymerase catalyzes the transcription of DNA into RNA using the four ribonucleoside triphosphates as substrates. This Enterococcus faecalis (strain ATCC 700802 / V583) protein is DNA-directed RNA polymerase subunit alpha.